Here is a 530-residue protein sequence, read N- to C-terminus: Ubiquitin carboxyl-terminal hydrolase 17-like protein 13 (530 aa).

The USP domain maps to 80–375; sequence AGLQNMGNTC…QAYVLFYIQK (296 aa). The active-site Nucleophile is the Cys89. His334 functions as the Proton acceptor in the catalytic mechanism. 2 stretches are compositionally biased toward basic and acidic residues: residues 382–392 and 398–412; these read SESVSRGREPR and DTDR…KRDH. Disordered stretches follow at residues 382–412 and 477–530; these read SESV…KRDH and NHHP…LVCQ. The segment covering 493-505 has biased composition (polar residues); it reads TPTHQESMNTGTL. Positions 510–524 are enriched in basic residues; the sequence is GRARRSKGKNKHSKR.

The protein belongs to the peptidase C19 family. USP17 subfamily.

The protein localises to the nucleus. The protein resides in the endoplasmic reticulum. The catalysed reaction is Thiol-dependent hydrolysis of ester, thioester, amide, peptide and isopeptide bonds formed by the C-terminal Gly of ubiquitin (a 76-residue protein attached to proteins as an intracellular targeting signal).. Its function is as follows. Deubiquitinating enzyme that removes conjugated ubiquitin from specific proteins to regulate different cellular processes that may include cell proliferation, progression through the cell cycle, apoptosis, cell migration, and the cellular response to viral infection. This is Ubiquitin carboxyl-terminal hydrolase 17-like protein 13 (USP17L13) from Homo sapiens (Human).